The chain runs to 180 residues: D-lyxose ketol-isomerase (180 aa).

Residue lysine 62 coordinates D-fructose. Mn(2+) contacts are provided by histidine 75 and histidine 77. Residue lysine 86 participates in D-fructose binding. Glutamate 88 and histidine 143 together coordinate Mn(2+). Glutamate 156, aspartate 166, and arginine 175 together coordinate D-fructose.

Belongs to the D-lyxose ketol-isomerase family. In terms of assembly, homodimer; disulfide-linked. Stabilized by a disulfide bond between the two monomers of the dimeric enzyme and increased hydrophobicity at the dimer interface. It depends on Mn(2+) as a cofactor.

The enzyme catalyses D-lyxose = D-xylulose. In terms of biological role, sugar isomerase that catalyzes the reversible isomerization of D-lyxose to D-xylulose. Is highly specific for the substrate D-lyxose, showing less than 2% activity towards mannose and other substrates reported for lyxose isomerases. The protein is D-lyxose ketol-isomerase of Thermofilum sp. (strain ex4484_79).